Here is a 232-residue protein sequence, read N- to C-terminus: Aquaporin Z 2 (232 aa).

Helical transmembrane passes span 9–29 and 32–52; these read FLGT…ASAF and VGIG…TMAY. The NPA 1 motif lies at 63-65; sequence NPA. A run of 3 helical transmembrane segments spans residues 82-102, 129-149, and 158-178; these read VSYV…LYVI, LTAA…IILG, and GFAP…SIPV. Positions 184–186 match the NPA 2 motif; the sequence is NPA. The helical transmembrane segment at 200–220 threads the bilayer; that stretch reads LSQLWLFWIAPLFGAAIAGIV.

This sequence belongs to the MIP/aquaporin (TC 1.A.8) family. As to quaternary structure, homotetramer.

The protein localises to the cell inner membrane. The catalysed reaction is H2O(in) = H2O(out). Channel that permits osmotically driven movement of water in both directions. It is involved in the osmoregulation and in the maintenance of cell turgor during volume expansion in rapidly growing cells. It mediates rapid entry or exit of water in response to abrupt changes in osmolarity. The polypeptide is Aquaporin Z 2 (Rhizobium meliloti (strain 1021) (Ensifer meliloti)).